A 147-amino-acid polypeptide reads, in one-letter code: Hemoglobin subunit beta-2 (147 aa).

At V2 the chain carries N-acetylvaline. The 145-residue stretch at 3-147 folds into the Globin domain; it reads HLTDAEKATV…VASALAHKYH (145 aa). S13 is subject to Phosphoserine. An N6-succinyllysine modification is found at K18. Residues S51 and S53 each carry the phosphoserine modification. Residues H64 and H93 each coordinate heme b. Residue R105 is modified to Asymmetric dimethylarginine. T124 carries the post-translational modification Phosphothreonine. C126 is modified (phosphoserine; in variant Ser-126).

It belongs to the globin family. In terms of assembly, heterotetramer of two alpha chains and two beta chains. As to expression, red blood cells.

Involved in oxygen transport from the lung to the various peripheral tissues. This Rattus norvegicus (Rat) protein is Hemoglobin subunit beta-2.